The chain runs to 387 residues: Xylose isomerase (387 aa).

Residues histidine 53 and aspartate 56 contribute to the active site. Positions 180, 216, 219, 244, 254, 256, and 286 each coordinate Mg(2+).

The protein belongs to the xylose isomerase family. In terms of assembly, homotetramer. Requires Mg(2+) as cofactor.

The protein localises to the cytoplasm. It carries out the reaction alpha-D-xylose = alpha-D-xylulofuranose. In Thermus thermophilus (strain ATCC 27634 / DSM 579 / HB8), this protein is Xylose isomerase (xylA).